Reading from the N-terminus, the 297-residue chain is Homoserine kinase (297 aa).

82-92 (PLTRGLGSSAS) lines the ATP pocket.

This sequence belongs to the GHMP kinase family. Homoserine kinase subfamily.

It is found in the cytoplasm. The catalysed reaction is L-homoserine + ATP = O-phospho-L-homoserine + ADP + H(+). It participates in amino-acid biosynthesis; L-threonine biosynthesis; L-threonine from L-aspartate: step 4/5. Catalyzes the ATP-dependent phosphorylation of L-homoserine to L-homoserine phosphate. This chain is Homoserine kinase, found in Bacillus cereus (strain G9842).